A 347-amino-acid chain; its full sequence is Photosystem II assembly protein Ycf48 (347 aa).

The first 38 residues, 1-38 (MFAKQIDIHWQKMKGIKFLHWLLGTVLLWVSLSTPALA), serve as a signal peptide directing secretion. The short motif at 202-226 (RGSFYSTWEPGQTAWEPHNRTTSRR) is the Arg-rich patch element.

This sequence belongs to the Ycf48 family. As to quaternary structure, interacts with the D1 protein (crystallized with PsbA1 or PsbA3), via the latter's C-terminal prepropeptide, may interact with parts of the mature D1 protein as well.

It is found in the cellular thylakoid lumen. In terms of biological role, a factor required for optimal assembly of photosystem II (PSII), acting in the early stages of PSII assembly. Also plays a role in replacement of photodamaged D1 (psbA). Assists YidC in synthesis of chlorophyll-binding proteins. The polypeptide is Photosystem II assembly protein Ycf48 (Thermosynechococcus vestitus (strain NIES-2133 / IAM M-273 / BP-1)).